An 86-amino-acid polypeptide reads, in one-letter code: Small ribosomal subunit protein bS18c (86 aa).

The protein belongs to the bacterial ribosomal protein bS18 family. Part of the 30S ribosomal subunit.

Its subcellular location is the plastid. It is found in the chloroplast. This is Small ribosomal subunit protein bS18c from Larix laricina (Tamarack).